The following is a 248-amino-acid chain: uncharacterized protein (248 aa).

Residues 1–23 (MLKKIVIGVTATAAFGIGAGALA) form the signal peptide.

The protein localises to the cell outer membrane. This is an uncharacterized protein from Coxiella burnetii (strain RSA 493 / Nine Mile phase I).